We begin with the raw amino-acid sequence, 316 residues long: Transaldolase (316 aa).

Lys-132 (schiff-base intermediate with substrate) is an active-site residue.

Belongs to the transaldolase family. Type 1 subfamily. As to quaternary structure, homodimer.

It localises to the cytoplasm. It catalyses the reaction D-sedoheptulose 7-phosphate + D-glyceraldehyde 3-phosphate = D-erythrose 4-phosphate + beta-D-fructose 6-phosphate. It functions in the pathway carbohydrate degradation; pentose phosphate pathway; D-glyceraldehyde 3-phosphate and beta-D-fructose 6-phosphate from D-ribose 5-phosphate and D-xylulose 5-phosphate (non-oxidative stage): step 2/3. Functionally, transaldolase is important for the balance of metabolites in the pentose-phosphate pathway. The chain is Transaldolase from Vibrio cholerae serotype O1 (strain ATCC 39541 / Classical Ogawa 395 / O395).